Here is a 158-residue protein sequence, read N- to C-terminus: Cyclic pyranopterin monophosphate synthase (158 aa).

Residues 75–77 (LCH) and 113–114 (ME) each bind substrate. The active site involves Asp-128.

Belongs to the MoaC family. Homohexamer; trimer of dimers.

The enzyme catalyses (8S)-3',8-cyclo-7,8-dihydroguanosine 5'-triphosphate = cyclic pyranopterin phosphate + diphosphate. It functions in the pathway cofactor biosynthesis; molybdopterin biosynthesis. Catalyzes the conversion of (8S)-3',8-cyclo-7,8-dihydroguanosine 5'-triphosphate to cyclic pyranopterin monophosphate (cPMP). This is Cyclic pyranopterin monophosphate synthase from Roseiflexus castenholzii (strain DSM 13941 / HLO8).